A 211-amino-acid chain; its full sequence is Thiamine-phosphate synthase (211 aa).

4-amino-2-methyl-5-(diphosphooxymethyl)pyrimidine contacts are provided by residues 37 to 41 and Asn-69; that span reads QLRIK. Asp-70 and Asp-89 together coordinate Mg(2+). Ser-108 contributes to the 4-amino-2-methyl-5-(diphosphooxymethyl)pyrimidine binding site. 134 to 136 is a 2-[(2R,5Z)-2-carboxy-4-methylthiazol-5(2H)-ylidene]ethyl phosphate binding site; the sequence is TQT. Lys-137 contacts 4-amino-2-methyl-5-(diphosphooxymethyl)pyrimidine. 2-[(2R,5Z)-2-carboxy-4-methylthiazol-5(2H)-ylidene]ethyl phosphate contacts are provided by residues Gly-166 and 186 to 187; that span reads VS.

Belongs to the thiamine-phosphate synthase family. Mg(2+) is required as a cofactor.

It catalyses the reaction 2-[(2R,5Z)-2-carboxy-4-methylthiazol-5(2H)-ylidene]ethyl phosphate + 4-amino-2-methyl-5-(diphosphooxymethyl)pyrimidine + 2 H(+) = thiamine phosphate + CO2 + diphosphate. It carries out the reaction 2-(2-carboxy-4-methylthiazol-5-yl)ethyl phosphate + 4-amino-2-methyl-5-(diphosphooxymethyl)pyrimidine + 2 H(+) = thiamine phosphate + CO2 + diphosphate. The enzyme catalyses 4-methyl-5-(2-phosphooxyethyl)-thiazole + 4-amino-2-methyl-5-(diphosphooxymethyl)pyrimidine + H(+) = thiamine phosphate + diphosphate. It functions in the pathway cofactor biosynthesis; thiamine diphosphate biosynthesis; thiamine phosphate from 4-amino-2-methyl-5-diphosphomethylpyrimidine and 4-methyl-5-(2-phosphoethyl)-thiazole: step 1/1. Its function is as follows. Condenses 4-methyl-5-(beta-hydroxyethyl)thiazole monophosphate (THZ-P) and 2-methyl-4-amino-5-hydroxymethyl pyrimidine pyrophosphate (HMP-PP) to form thiamine monophosphate (TMP). This Salmonella dublin (strain CT_02021853) protein is Thiamine-phosphate synthase.